Consider the following 148-residue polypeptide: Large ribosomal subunit protein uL11 (148 aa).

The segment at 89–108 (EKKKGSGAHKPGKEKVGQVT) is disordered.

The protein belongs to the universal ribosomal protein uL11 family. In terms of assembly, part of the ribosomal stalk of the 50S ribosomal subunit. Interacts with L10 and the large rRNA to form the base of the stalk. L10 forms an elongated spine to which L12 dimers bind in a sequential fashion forming a multimeric L10(L12)X complex. In terms of processing, one or more lysine residues are methylated.

Forms part of the ribosomal stalk which helps the ribosome interact with GTP-bound translation factors. This chain is Large ribosomal subunit protein uL11, found in Anaeromyxobacter sp. (strain Fw109-5).